Reading from the N-terminus, the 428-residue chain is Tyrosine--tRNA ligase (428 aa).

L-tyrosine is bound at residue tyrosine 34. Positions 39 to 48 (PTADSLHIGH) match the 'HIGH' region motif. The L-tyrosine site is built by tyrosine 171 and glutamine 175. A 'KMSKS' region motif is present at residues 236–240 (KFGKT). Lysine 239 is a binding site for ATP. One can recognise an S4 RNA-binding domain in the interval 358-424 (VGLIDLLVDA…GKKKYFLIQV (67 aa)).

The protein belongs to the class-I aminoacyl-tRNA synthetase family. TyrS type 1 subfamily. As to quaternary structure, homodimer.

Its subcellular location is the cytoplasm. It catalyses the reaction tRNA(Tyr) + L-tyrosine + ATP = L-tyrosyl-tRNA(Tyr) + AMP + diphosphate + H(+). Catalyzes the attachment of tyrosine to tRNA(Tyr) in a two-step reaction: tyrosine is first activated by ATP to form Tyr-AMP and then transferred to the acceptor end of tRNA(Tyr). This Oceanobacillus iheyensis (strain DSM 14371 / CIP 107618 / JCM 11309 / KCTC 3954 / HTE831) protein is Tyrosine--tRNA ligase.